The sequence spans 317 residues: MEQSNYSVYADFILLGLFSNARFPWLLFALILLVFLTSIASNVVKIILIHIDSRLHTPMYFLLSQLSLRDILYISTIVPKMLVDQVMSQRAISFAGCTAQHFLYLTLAGAEFFLLGLMSYDRYVAICNPLHYPVLMSRKICWLIVAAAWLGGSIDGFLLTPVTMQFPFCASREINHFFCEVPALLKLSCTDTSAYETAMYVCCIMMLLIPFSVISGSYTRILITVYRMSEAEGRGKAVATCSSHMVVVSLFYGAAMYTYVLPHSYHTPEQDKAVSAFYTILTPMLNPLIYSLRNKDVTGALQKVVGRCVSSGKVTTF.

Residues methionine 1–arginine 22 lie on the Extracellular side of the membrane. N-linked (GlcNAc...) asparagine glycosylation is present at asparagine 5. A helical membrane pass occupies residues phenylalanine 23–valine 43. Topologically, residues valine 44–tyrosine 60 are cytoplasmic. A helical transmembrane segment spans residues phenylalanine 61 to valine 83. The Extracellular portion of the chain corresponds to aspartate 84 to cysteine 97. Cysteine 97 and cysteine 189 are disulfide-bonded. Residues threonine 98 to methionine 118 form a helical membrane-spanning segment. Topologically, residues serine 119–lysine 139 are cytoplasmic. A helical membrane pass occupies residues isoleucine 140–threonine 160. The Extracellular segment spans residues proline 161 to threonine 197. The helical transmembrane segment at alanine 198 to tyrosine 218 threads the bilayer. Residues threonine 219–histidine 244 are Cytoplasmic-facing. The helical transmembrane segment at methionine 245–tyrosine 265 threads the bilayer. Residues histidine 266–aspartate 271 are Extracellular-facing. The chain crosses the membrane as a helical span at residues lysine 272–leucine 292. Residues arginine 293–phenylalanine 317 lie on the Cytoplasmic side of the membrane.

It belongs to the G-protein coupled receptor 1 family.

The protein localises to the cell membrane. Odorant receptor. The polypeptide is Olfactory receptor 2T27 (OR2T27) (Homo sapiens (Human)).